Reading from the N-terminus, the 429-residue chain is Probable M18 family aminopeptidase 2 (429 aa).

The Zn(2+) site is built by histidine 82, histidine 156, and histidine 401.

Belongs to the peptidase M18 family. Zn(2+) is required as a cofactor.

In Azotobacter vinelandii (strain DJ / ATCC BAA-1303), this protein is Probable M18 family aminopeptidase 2.